The primary structure comprises 116 residues: S-adenosylmethionine decarboxylase proenzyme (116 aa).

Catalysis depends on Ser-63, which acts as the Schiff-base intermediate with substrate; via pyruvic acid. The residue at position 63 (Ser-63) is a Pyruvic acid (Ser); by autocatalysis. The active-site Proton acceptor; for processing activity is His-68. Cys-83 (proton donor; for catalytic activity) is an active-site residue.

The protein belongs to the prokaryotic AdoMetDC family. Type 1 subfamily. Heterotetramer of two alpha and two beta chains arranged as a dimer of alpha/beta heterodimers. It depends on pyruvate as a cofactor. Post-translationally, is synthesized initially as an inactive proenzyme. Formation of the active enzyme involves a self-maturation process in which the active site pyruvoyl group is generated from an internal serine residue via an autocatalytic post-translational modification. Two non-identical subunits are generated from the proenzyme in this reaction, and the pyruvate is formed at the N-terminus of the alpha chain, which is derived from the carboxyl end of the proenzyme. The post-translation cleavage follows an unusual pathway, termed non-hydrolytic serinolysis, in which the side chain hydroxyl group of the serine supplies its oxygen atom to form the C-terminus of the beta chain, while the remainder of the serine residue undergoes an oxidative deamination to produce ammonia and the pyruvoyl group blocking the N-terminus of the alpha chain.

The catalysed reaction is S-adenosyl-L-methionine + H(+) = S-adenosyl 3-(methylsulfanyl)propylamine + CO2. The protein operates within amine and polyamine biosynthesis; S-adenosylmethioninamine biosynthesis; S-adenosylmethioninamine from S-adenosyl-L-methionine: step 1/1. Catalyzes the decarboxylation of S-adenosylmethionine to S-adenosylmethioninamine (dcAdoMet), the propylamine donor required for the synthesis of the polyamines spermine and spermidine from the diamine putrescine. This chain is S-adenosylmethionine decarboxylase proenzyme, found in Clostridium botulinum (strain ATCC 19397 / Type A).